Reading from the N-terminus, the 264-residue chain is uncharacterized protein (264 aa).

8 consecutive transmembrane segments (helical) span residues 19–39, 42–62, 69–89, 100–120, 136–156, 160–180, 192–212, and 223–243; these read LFPAVIFASLAITQIIPLPFL, YDWLLIICVLMQLWMVRSGLE, VITLFHLIGLALELFKVHMGS, IFGVPLYSGFMYASVASYLCQ, FAVVPLAAAIYLNFFTHHFSI, WWLSGLVIIVFWQTWVTYEVN, FILIGFFIWIAENIATFFGAW, and LVHLGKVSSWLLLVIVSFLIV.

Its subcellular location is the cell membrane. This is an uncharacterized protein from Bacillus subtilis (strain 168).